The chain runs to 205 residues: Holliday junction branch migration complex subunit RuvA (205 aa).

Residues 1 to 64 (MIGRLRGIIL…EDAQLLFGFN (64 aa)) are domain I. The domain II stretch occupies residues 65–143 (DKQERALFRE…GLSGDLFNSV (79 aa)). The segment at 144–156 (SDIPLTSPANVDN) is flexible linker. The interval 157-205 (RVGEPEAEAAAALVALGYKPQEASRMISKIARPDADCETLIRDALRAAL) is domain III.

This sequence belongs to the RuvA family. In terms of assembly, homotetramer. Forms an RuvA(8)-RuvB(12)-Holliday junction (HJ) complex. HJ DNA is sandwiched between 2 RuvA tetramers; dsDNA enters through RuvA and exits via RuvB. An RuvB hexamer assembles on each DNA strand where it exits the tetramer. Each RuvB hexamer is contacted by two RuvA subunits (via domain III) on 2 adjacent RuvB subunits; this complex drives branch migration. In the full resolvosome a probable DNA-RuvA(4)-RuvB(12)-RuvC(2) complex forms which resolves the HJ.

The protein resides in the cytoplasm. Its function is as follows. The RuvA-RuvB-RuvC complex processes Holliday junction (HJ) DNA during genetic recombination and DNA repair, while the RuvA-RuvB complex plays an important role in the rescue of blocked DNA replication forks via replication fork reversal (RFR). RuvA specifically binds to HJ cruciform DNA, conferring on it an open structure. The RuvB hexamer acts as an ATP-dependent pump, pulling dsDNA into and through the RuvAB complex. HJ branch migration allows RuvC to scan DNA until it finds its consensus sequence, where it cleaves and resolves the cruciform DNA. This is Holliday junction branch migration complex subunit RuvA from Pectobacterium atrosepticum (strain SCRI 1043 / ATCC BAA-672) (Erwinia carotovora subsp. atroseptica).